We begin with the raw amino-acid sequence, 256 residues long: Ribonuclease 3-like protein 1 (256 aa).

In terms of domain architecture, RNase III spans 22-168; sequence AEVERALGGY…IVGAVYLDSK (147 aa). Residues Glu-65, Asp-154, and Glu-157 each coordinate Mg(2+).

It depends on Mg(2+) as a cofactor. Mn(2+) is required as a cofactor.

Functionally, cleaves double-stranded RNA (dsRNA). This is Ribonuclease 3-like protein 1 from Oryza sativa subsp. japonica (Rice).